The chain runs to 526 residues: MAEYVFSDAPKDSHGNGVKDAVPGKQPEELPPAPRYFQGENTAGFMRPVRFEGDITNLEVVGEIPKSIEGTFYRVMPEPHLPSFIPNDPWFNGDGNISGFYFKDGHVDLKQRYVRTEKFVREAEARRSLLGKYRNRYTDLVEFKIRSTANTNIVYWRGQLLALKEDSPPYAMDPETLETFGVYDFDGQLPSLTFTAHPKFDPVTREMVCFGYEAKGDGTRDICYYSFGPDGKIAETVWLVSPVCGMIHDFAVTENFVIFPIIPLVCDVERMKQGGDHWQWDYSIPMYIGVLPRRGAQGSDVKWFEAPHGFAGHVANAFEDDKGHIQLQMAYAKDNVFFWWPDANGKGPRPGEVEAHFANFVLDYQSDKLPLAEPTYLVDDDMEFPRIDDRVATRKHKHTFFCIFDRKPGVTDFEFVMPRAGGGAPMSNGLAHLNHETGDIQRYLPGPRKLTGECIFIPRNSEAAEGDGYVMVLLANYEDMCSELAVLDTKDLTNEVALIKLPVRLRPGLHGNWVDKSDVDGHPAPL.

Residues M1 to A33 are disordered. 2 residues coordinate piceatannol: Y133 and K164. Positions 133 and 164 each coordinate trans-resveratrol. The Fe cation site is built by H197, H248, and H313. A piceatannol-binding site is contributed by E383. E383 is a binding site for trans-resveratrol. H510 serves as a coordination point for Fe cation.

It belongs to the carotenoid oxygenase family. Fe(2+) is required as a cofactor.

It carries out the reaction trans-resveratrol + O2 = 3,5-dihydroxybenzaldehyde + 4-hydroxybenzaldehyde. The catalysed reaction is piceatannol + O2 = 3,5-dihydroxybenzaldehyde + 3,4-dihydroxybenzaldehyde. In terms of biological role, dioxygenase that cleaves the interphenyl C-alpha-C-beta double bond of resveratrol to yield 3,5-dihydroxybenzaldehyde and 4-hydroxybenzaldehyde. Also cleaves piceatannol, a compound that differs from resveratrol only in the occurrence of an additional hydroxyl group, which leads to the production of 3,4-dihydroxybenzaldehyde and 3,5-hydroxybenzaldehyde. Is not able to cleave trans-stilbene, 4-monohydroxy-trans-stilbene, 3,5-dihydroxy-trans-stilbene (pinosylvin), trismethoxy-resveratrol, and 3,3',5-trihydroxy-4'-methoxystilbene-3-O-beta-D-glucoside. Is not involved in carotenoid metabolism. This chain is Carotenoid cleavage oxygenase 1, found in Neurospora crassa (strain ATCC 24698 / 74-OR23-1A / CBS 708.71 / DSM 1257 / FGSC 987).